The chain runs to 66 residues: Small ribosomal subunit protein eS30 (66 aa).

Positions 1 to 35 (MGKVHGGLNRAGKVRNATPKKDKEEKRKPKVGRAK) are disordered.

It belongs to the eukaryotic ribosomal protein eS30 family.

In Dictyostelium discoideum (Social amoeba), this protein is Small ribosomal subunit protein eS30 (rps30-1).